The sequence spans 670 residues: Tyramine beta-hydroxylase (670 aa).

Over residues 26-35 (HHQLAYHHHK) the composition is skewed to basic residues. Residues 26–63 (HHQLAYHHHKQEQQQQQQQQQQQQAKQKQKQNGVQQGR) are disordered. The span at 38-61 (QQQQQQQQQQQQAKQKQKQNGVQQ) shows a compositional bias: low complexity. The helical transmembrane segment at 65–81 (PTFMPVMLLLLMATLLT) threads the bilayer. A DOMON domain is found at 104-220 (KEIKLSWMVD…GTMYVVWARG (117 aa)). The N-linked (GlcNAc...) asparagine glycan is linked to asparagine 235. Residue tyrosine 281 is part of the active site. Intrachain disulfides connect cysteine 283–cysteine 334 and cysteine 319–cysteine 344. Cu(2+) contacts are provided by histidine 312 and histidine 313. Cu(2+) is bound by residues histidine 382, histidine 461, histidine 463, and methionine 536. 3 disulfide bridges follow: cysteine 439–cysteine 552, cysteine 443–cysteine 613, and cysteine 515–cysteine 537. Residue histidine 461 is part of the active site. The N-linked (GlcNAc...) asparagine glycan is linked to asparagine 614.

It belongs to the copper type II ascorbate-dependent monooxygenase family. In terms of assembly, is most likely a monomer under physiological conditions, although under conditions of high pH and low ionic strength the dimeric form predominates. Both forms are equally active. Requires Cu(2+) as cofactor. Present in head and in neurons innervating the oviduct (at protein level).

It localises to the membrane. The enzyme catalyses tyramine + L-ascorbate + O2 = (R)-octopamine + L-dehydroascorbate + H2O. Functionally, catalyzes the hydroxylation of tyramine into octopamine, a neurotransmitter involved in ovulation and locomotion. Functions in an amine-mediated Bacc-dependent signaling pathway that negatively regulates acute ethanol sensitivity. Involved in facilitation of nociceptive escape behavior in response to potentially damaging stimuli, such as high temperatures. The chain is Tyramine beta-hydroxylase (Tbh) from Drosophila melanogaster (Fruit fly).